The primary structure comprises 682 residues: L-type lectin-domain containing receptor kinase VI.2 (682 aa).

Positions M1–A26 are cleaved as a signal peptide. Over Q27–V310 the chain is Extracellular. The segment at T29–S277 is legume-lectin like. Residues I311–F331 traverse the membrane as a helical segment. Over V332–Q682 the chain is Cytoplasmic. The 275-residue stretch at F367–V641 folds into the Protein kinase domain. Residues I373–V381 and K395 each bind ATP. D494 acts as the Proton acceptor in catalysis.

It in the C-terminal section; belongs to the protein kinase superfamily. Ser/Thr protein kinase family. This sequence in the N-terminal section; belongs to the leguminous lectin family. In terms of tissue distribution, strongly expressed in the vascular system and trichomes of the leaves. Also expressed in guard cells, anthers, stigmas and germinating seeds, but not found in petals or roots. Increased susceptibility to the bacteria Pseudomonas syringae, characterized by stronger necrotic symptoms and higher bacterial proliferation.

Its subcellular location is the cell membrane. It carries out the reaction L-seryl-[protein] + ATP = O-phospho-L-seryl-[protein] + ADP + H(+). It catalyses the reaction L-threonyl-[protein] + ATP = O-phospho-L-threonyl-[protein] + ADP + H(+). In terms of biological role, involved in negative regulation of abscisic acid response in seed germination. Involved in resistance response to the pathogenic bacteria Pseudomonas syringae. This chain is L-type lectin-domain containing receptor kinase VI.2, found in Arabidopsis thaliana (Mouse-ear cress).